The following is a 180-amino-acid chain: ADP-ribosylation factor 4 (180 aa).

Glycine 2 is lipidated: N-myristoyl glycine. GTP contacts are provided by residues 24-31 (GLDAAGKT), 67-71 (DVGGQ), and 126-129 (NKQD). Serine 147 carries the post-translational modification Phosphoserine.

Belongs to the small GTPase superfamily. Arf family. In terms of assembly, forms a complex containing RAB11A, ASAP1, RAB3IP, RAP11FIP3 and ARF4; the complex promotes preciliary trafficking; the complex binds to RHO in photoreceptor cells and promotes RHO ciliary transport.

The protein resides in the golgi apparatus. It is found in the membrane. GTP-binding protein that functions as an allosteric activator of the cholera toxin catalytic subunit, an ADP-ribosyltransferase. Involved in protein trafficking; may modulate vesicle budding and uncoating within the Golgi apparatus. Part of the ciliary targeting complex containing Rab11, ASAP1, Rabin8/RAB3IP, RAB11FIP3 and ARF4, which direct preciliary vesicle trafficking to mother centriole and ciliogenesis initiation. The protein is ADP-ribosylation factor 4 (ARF4) of Homo sapiens (Human).